A 110-amino-acid chain; its full sequence is MSAMLNENVPVEFQEAHGYAAREKVVLRMRGRSWTVRLKHTKGRRPRRERAVLRYGWHRFCADNGLAVGDTCFFRALRSAGSGAGDVDDGDGDHVLSVTVHKADGGDPLE.

The segment at residues 1 to 104 (MSAMLNENVP…VLSVTVHKAD (104 aa)) is a DNA-binding region (TF-B3).

It is found in the nucleus. The polypeptide is B3 domain-containing protein LOC_Os02g10420 (Oryza sativa subsp. japonica (Rice)).